The following is a 788-amino-acid chain: Phenylalanine--tRNA ligase beta subunit (788 aa).

Residues 39–147 (FNVSGEIITA…DPVELGVNVV (109 aa)) form the tRNA-binding domain. In terms of domain architecture, B5 spans 399-472 (IEPKKVMLRK…RIYGYEKVES (74 aa)). The Mg(2+) site is built by Asp-450, Asp-456, Glu-459, and Glu-460. Residues 694–787 (PRFPAVRRDI…AEREFGIRRR (94 aa)) form the FDX-ACB domain.

This sequence belongs to the phenylalanyl-tRNA synthetase beta subunit family. Type 1 subfamily. As to quaternary structure, tetramer of two alpha and two beta subunits. Mg(2+) is required as a cofactor.

It is found in the cytoplasm. The enzyme catalyses tRNA(Phe) + L-phenylalanine + ATP = L-phenylalanyl-tRNA(Phe) + AMP + diphosphate + H(+). The sequence is that of Phenylalanine--tRNA ligase beta subunit (pheT) from Thermotoga maritima (strain ATCC 43589 / DSM 3109 / JCM 10099 / NBRC 100826 / MSB8).